A 182-amino-acid chain; its full sequence is Ribosome maturation factor RimM (182 aa).

A PRC barrel domain is found at 101-174 (QDEYFIHQLY…QIVVRLLPGL (74 aa)).

It belongs to the RimM family. In terms of assembly, binds ribosomal protein uS19.

The protein localises to the cytoplasm. Functionally, an accessory protein needed during the final step in the assembly of 30S ribosomal subunit, possibly for assembly of the head region. Essential for efficient processing of 16S rRNA. May be needed both before and after RbfA during the maturation of 16S rRNA. It has affinity for free ribosomal 30S subunits but not for 70S ribosomes. This chain is Ribosome maturation factor RimM, found in Roseiflexus sp. (strain RS-1).